The following is a 95-amino-acid chain: Probable dolichol-phosphate mannosyltransferase subunit 3 (95 aa).

Helical transmembrane passes span 10–30 (AHVI…VPVL) and 44–64 (APFF…VYGV).

Belongs to the DPM3 family.

The protein localises to the endoplasmic reticulum membrane. Its pathway is protein modification; protein glycosylation. Stabilizer subunit of the dolichol-phosphate-mannose synthase complex. The chain is Probable dolichol-phosphate mannosyltransferase subunit 3 (dpm-3) from Caenorhabditis elegans.